A 183-amino-acid polypeptide reads, in one-letter code: Gamma-crystallin N (183 aa).

Beta/gamma crystallin 'Greek key' domains follow at residues 6–46 (GKII…RVET), 47–89 (GAWI…KPVR), 95–136 (YRLE…KVYG), and 138–180 (GAWV…RRVV).

The protein belongs to the beta/gamma-crystallin family. Monomer.

In terms of biological role, crystallins are the dominant structural components of the vertebrate eye lens. The polypeptide is Gamma-crystallin N (crygn) (Xenopus tropicalis (Western clawed frog)).